The sequence spans 157 residues: 2-C-methyl-D-erythritol 2,4-cyclodiphosphate synthase (157 aa).

Residues D8 and H10 each contribute to the a divalent metal cation site. 4-CDP-2-C-methyl-D-erythritol 2-phosphate-binding positions include 8–10 (DIH) and 34–35 (HS). H42 serves as a coordination point for a divalent metal cation. Residues 56-58 (DIG) and 132-135 (TTNE) each bind 4-CDP-2-C-methyl-D-erythritol 2-phosphate.

Belongs to the IspF family. In terms of assembly, homotrimer. It depends on a divalent metal cation as a cofactor.

The catalysed reaction is 4-CDP-2-C-methyl-D-erythritol 2-phosphate = 2-C-methyl-D-erythritol 2,4-cyclic diphosphate + CMP. It functions in the pathway isoprenoid biosynthesis; isopentenyl diphosphate biosynthesis via DXP pathway; isopentenyl diphosphate from 1-deoxy-D-xylulose 5-phosphate: step 4/6. In terms of biological role, involved in the biosynthesis of isopentenyl diphosphate (IPP) and dimethylallyl diphosphate (DMAPP), two major building blocks of isoprenoid compounds. Catalyzes the conversion of 4-diphosphocytidyl-2-C-methyl-D-erythritol 2-phosphate (CDP-ME2P) to 2-C-methyl-D-erythritol 2,4-cyclodiphosphate (ME-CPP) with a corresponding release of cytidine 5-monophosphate (CMP). This chain is 2-C-methyl-D-erythritol 2,4-cyclodiphosphate synthase, found in Synechococcus sp. (strain JA-3-3Ab) (Cyanobacteria bacterium Yellowstone A-Prime).